A 167-amino-acid polypeptide reads, in one-letter code: Alanine- and arginine-rich domain-containing protein (167 aa).

The disordered stretch occupies residues 140–167; sequence LKKRQDQELASKPQSPQDKEMNSECGSA.

In terms of tissue distribution, preferentially expressed in testis both in embryo and adult. Expressed at much lower level in other tissues.

The chain is Alanine- and arginine-rich domain-containing protein (Aard) from Mus musculus (Mouse).